The sequence spans 130 residues: Histone H2A type 2 (130 aa).

The tract at residues 1–22 (MSGRGKQGGKTRAKSKTRSSRA) is disordered. S2 is modified (N-acetylserine). S2 bears the Phosphoserine mark. K6 carries the post-translational modification N6-(2-hydroxyisobutyryl)lysine. K6 is modified (N6-acetyllysine). The span at 7–19 (QGGKTRAKSKTRS) shows a compositional bias: basic residues. K10 carries the post-translational modification N6-(2-hydroxyisobutyryl)lysine; alternate. K10 carries the N6-lactoyllysine; alternate modification. N6-succinyllysine is present on K10. Glycyl lysine isopeptide (Lys-Gly) (interchain with G-Cter in ubiquitin) cross-links involve residues K14 and K16. N6-(2-hydroxyisobutyryl)lysine; alternate is present on K37. At K76 the chain carries N6-(2-hydroxyisobutyryl)lysine. The residue at position 96 (K96) is an N6-(2-hydroxyisobutyryl)lysine; alternate. At K96 the chain carries N6-succinyllysine. K96 bears the N6-glutaryllysine; alternate mark. Position 105 is an N5-methylglutamine (Q105). The residue at position 119 (K119) is an N6-(2-hydroxyisobutyryl)lysine; alternate. At K119 the chain carries N6-glutaryllysine; alternate. K120 is covalently cross-linked (Glycyl lysine isopeptide (Lys-Gly) (interchain with G-Cter in ubiquitin)).

The protein belongs to the histone H2A family. The nucleosome is a histone octamer containing two molecules each of H2A, H2B, H3 and H4 assembled in one H3-H4 heterotetramer and two H2A-H2B heterodimers. The octamer wraps approximately 147 bp of DNA. Monoubiquitination of Lys-120 (H2AK119Ub) gives a specific tag for epigenetic transcriptional repression. Following DNA double-strand breaks (DSBs), it is ubiquitinated through 'Lys-63' linkage of ubiquitin moieties, leading to the recruitment of repair proteins to sites of DNA damage. H2AK119Ub and ionizing radiation-induced 'Lys-63'-linked ubiquitination are distinct events. In terms of processing, phosphorylation on Ser-2 is enhanced during mitosis. Phosphorylation on Ser-2 directly represses transcription. Post-translationally, glutamine methylation at Gln-105 (H2AQ104me) by FBL is specifically dedicated to polymerase I. It is present at 35S ribosomal DNA locus and impairs binding of the FACT complex.

The protein resides in the nucleus. Its subcellular location is the chromosome. In terms of biological role, core component of nucleosome. Nucleosomes wrap and compact DNA into chromatin, limiting DNA accessibility to the cellular machineries which require DNA as a template. Histones thereby play a central role in transcription regulation, DNA repair, DNA replication and chromosomal stability. DNA accessibility is regulated via a complex set of post-translational modifications of histones, also called histone code, and nucleosome remodeling. The sequence is that of Histone H2A type 2 from Xenopus laevis (African clawed frog).